The primary structure comprises 338 residues: Popeye domain-containing protein 1-A (338 aa).

The Extracellular portion of the chain corresponds to 1–40 (MTTESIFITTLPMDFNSQFDNITIGLNDNETLCENWREIH). Residues asparagine 21 and asparagine 29 are each glycosylated (N-linked (GlcNAc...) asparagine). Residues 41-61 (HLVFHLANTCFAAGLVIPSTL) traverse the membrane as a helical segment. Residues 62–65 (NLHM) lie on the Cytoplasmic side of the membrane. The chain crosses the membrane as a helical span at residues 66-86 (LFLRGMLCLGCTFFIIWAVLF). The Extracellular portion of the chain corresponds to 87–91 (RCALD). A helical transmembrane segment spans residues 92-112 (IMIWNATFLSINFMHFVYLVY). The Cytoplasmic portion of the chain corresponds to 113–338 (KKRPIKIKKE…VGPLSHAVFC (226 aa)). The tract at residues 296 to 317 (TNDNEDGLQNFLRGTSTTSSQR) is disordered. Residues 307–317 (LRGTSTTSSQR) show a composition bias toward polar residues.

It belongs to the popeye family. In terms of tissue distribution, expressed in the heart.

Its subcellular location is the lateral cell membrane. It is found in the cell junction. The protein localises to the tight junction. The protein resides in the membrane. In terms of biological role, cell adhesion molecule involved in the establishment and/or maintenance of cell integrity. Plays a role in vamp3-mediated vesicular transport and recycling of different receptor molecules. May be involved in the formation and regulation of the tight junction (TJ) paracellular permeability barrier in epithelial cells. May induce primordial adhesive contact and aggregation of epithelial cells in a Ca(2+)-independent manner. May be involved in epithelial movement during corneal sheet formation and regeneration. May play a role in the regulation of cell shape and movement by modulating the Rho-GTPase activity. May also be involved in striated muscle regeneration and in the regulation of cell spreading. The chain is Popeye domain-containing protein 1-A (popdc1-a) from Xenopus laevis (African clawed frog).